The chain runs to 278 residues: Phosphatidylglycerol--prolipoprotein diacylglyceryl transferase (278 aa).

4 consecutive transmembrane segments (helical) span residues 19 to 39, 49 to 69, 83 to 103, and 112 to 132; these read WYGI…INEG, FIDF…IYYV, IIAI…GLIV, and MLPP…AQVI. Arg134 provides a ligand contact to a 1,2-diacyl-sn-glycero-3-phospho-(1'-sn-glycerol). 3 helical membrane passes run 174–194, 204–224, and 235–255; these read QPTY…ILSL, GEVF…VEGM, and IRVS…LWVY.

The protein belongs to the Lgt family.

It localises to the cell membrane. The enzyme catalyses L-cysteinyl-[prolipoprotein] + a 1,2-diacyl-sn-glycero-3-phospho-(1'-sn-glycerol) = an S-1,2-diacyl-sn-glyceryl-L-cysteinyl-[prolipoprotein] + sn-glycerol 1-phosphate + H(+). It participates in protein modification; lipoprotein biosynthesis (diacylglyceryl transfer). Catalyzes the transfer of the diacylglyceryl group from phosphatidylglycerol to the sulfhydryl group of the N-terminal cysteine of a prolipoprotein, the first step in the formation of mature lipoproteins. The polypeptide is Phosphatidylglycerol--prolipoprotein diacylglyceryl transferase (Lactobacillus gasseri (strain ATCC 33323 / DSM 20243 / BCRC 14619 / CIP 102991 / JCM 1131 / KCTC 3163 / NCIMB 11718 / NCTC 13722 / AM63)).